The sequence spans 192 residues: Urease accessory protein UreE (192 aa).

A disordered region spans residues 170–192 (EHHGHSHSHSHDHVHDEKCGHKH). The segment covering 178–192 (HSHDHVHDEKCGHKH) has biased composition (basic and acidic residues).

Belongs to the UreE family.

The protein resides in the cytoplasm. Involved in urease metallocenter assembly. Binds nickel. Probably functions as a nickel donor during metallocenter assembly. In Cupriavidus necator (strain ATCC 17699 / DSM 428 / KCTC 22496 / NCIMB 10442 / H16 / Stanier 337) (Ralstonia eutropha), this protein is Urease accessory protein UreE.